We begin with the raw amino-acid sequence, 490 residues long: Histone-lysine N-methyltransferase Smyd1 (490 aa).

Residues 7-253 enclose the SET domain; it reads ENVEVFTSEG…EGEELTVSYI (247 aa). An S-adenosyl-L-methionine-binding site is contributed by 17 to 19; it reads KGR. The Zn(2+) site is built by cysteine 52, cysteine 55, cysteine 65, cysteine 68, cysteine 74, cysteine 78, histidine 86, and cysteine 90. The MYND-type zinc-finger motif lies at 52–90; sequence CHTCFKRQEKLHRCGQCKFAHYCDRTCQKDAWLNHKNEC. S-adenosyl-L-methionine is bound by residues histidine 135 and 205–206; that span reads NH. Residue cysteine 208 participates in Zn(2+) binding. Residue 270-272 coordinates S-adenosyl-L-methionine; sequence YYF. Zn(2+) contacts are provided by cysteine 274, cysteine 276, and cysteine 279.

Belongs to the class V-like SAM-binding methyltransferase superfamily. In terms of assembly, interacts with HDAC1, HDAC2 and HDAC3. Interacts (via MYND-type zinc finger) with NACA isoform skNAC. Expressed in cardiac and skeletal muscle, lymphocytes and thymus.

The protein localises to the cytoplasm. Its subcellular location is the nucleus. It carries out the reaction L-lysyl(4)-[histone H3] + 3 S-adenosyl-L-methionine = N(6),N(6),N(6)-trimethyl-L-lysyl(4)-[histone H3] + 3 S-adenosyl-L-homocysteine + 3 H(+). In terms of biological role, methylates histone H3 at 'Lys-4' (H3K4me). Acts as a transcriptional repressor. Essential for cardiomyocyte differentiation and cardiac morphogenesis. This chain is Histone-lysine N-methyltransferase Smyd1 (Smyd1), found in Mus musculus (Mouse).